Here is a 308-residue protein sequence, read N- to C-terminus: Ribonuclease HIII (308 aa).

Positions 91–308 (KNVIGSDEVG…TEKALKMVKK (218 aa)) constitute an RNase H type-2 domain. A divalent metal cation is bound by residues aspartate 97, glutamate 98, and aspartate 202.

Belongs to the RNase HII family. RnhC subfamily. Requires Mn(2+) as cofactor. Mg(2+) serves as cofactor.

Its subcellular location is the cytoplasm. The enzyme catalyses Endonucleolytic cleavage to 5'-phosphomonoester.. Functionally, endonuclease that specifically degrades the RNA of RNA-DNA hybrids. The polypeptide is Ribonuclease HIII (Listeria monocytogenes serotype 4b (strain F2365)).